Consider the following 270-residue polypeptide: Undecaprenyl-diphosphatase 3 (270 aa).

7 consecutive transmembrane segments (helical) span residues 5–25 (YYILKYLILGLFQGLTEPIPI), 42–62 (IEGFSFELLVNSASLLAVLLI), 89–109 (FFFIIYLVIATIPAGVIGVLF), 117–137 (LKGVKMVGISLLITAVGLWII), 192–212 (FSFLLYIPVSLGGLLLSITDI), 220–240 (TLFVPYIVAFIATFIMTYISL), and 250–270 (GNLKYFSFYCIIVGVLTLIFL).

The protein belongs to the UppP family.

Its subcellular location is the cell membrane. The enzyme catalyses di-trans,octa-cis-undecaprenyl diphosphate + H2O = di-trans,octa-cis-undecaprenyl phosphate + phosphate + H(+). Its function is as follows. Catalyzes the dephosphorylation of undecaprenyl diphosphate (UPP). Confers resistance to bacitracin. The protein is Undecaprenyl-diphosphatase 3 of Bacillus anthracis.